The chain runs to 1032 residues: Contactin-1a (1032 aa).

Positions Met1 to Ala31 are cleaved as a signal peptide. Ig-like C2-type domains lie at Pro46 to Gln139, Asp144 to Phe231, Pro249 to Tyr335, Pro340 to Arg417, Pro423 to Ser510, and Thr515 to Val612. Intrachain disulfides connect Cys70–Cys122 and Cys166–Cys219. 3 N-linked (GlcNAc...) asparagine glycosylation sites follow: Asn119, Asn216, and Asn266. 3 disulfides stabilise this stretch: Cys271-Cys319, Cys361-Cys401, and Cys446-Cys494. Asn455, Asn467, Asn483, and Asn504 each carry an N-linked (GlcNAc...) asparagine glycan. An intrachain disulfide couples Cys536 to Cys596. An N-linked (GlcNAc...) asparagine glycan is attached at Asn604. 4 Fibronectin type-III domains span residues Pro619–Ala718, Ala723–Asp820, Ala825–Ser918, and Pro920–Pro1015. Residues Asn699 to Gly729 are disordered. The N-linked (GlcNAc...) asparagine glycan is linked to Asn879. A disordered region spans residues Ala907–Ile926. Asn950 carries N-linked (GlcNAc...) asparagine glycosylation. Gly1010 is lipidated: GPI-anchor amidated glycine. Residues Ser1011–Leu1032 constitute a propeptide, removed in mature form.

It belongs to the immunoglobulin superfamily. Contactin family. As to expression, expressed in brain.

The protein resides in the cell membrane. Mediates cell surface interactions during nervous system development. In Danio rerio (Zebrafish), this protein is Contactin-1a (cntn1a).